We begin with the raw amino-acid sequence, 833 residues long: P protein (833 aa).

Residues 1–172 (MRLENKDIRL…QVSKLGCCVR (172 aa)) lie on the Cytoplasmic side of the membrane. The helical transmembrane segment at 173-193 (WIKITGLFVFVVLCSILFSLY) threads the bilayer. The Extracellular portion of the chain corresponds to 194-325 (PDQGKFWQLL…QFLGASVEAQ (132 aa)). N-linked (GlcNAc...) asparagine glycosylation is found at N210, N214, and N269. Residues 326–346 (VASAVAILAGVYTLIIFEIVH) form a helical membrane-spanning segment. Residues 347–348 (RT) are Cytoplasmic-facing. The chain crosses the membrane as a helical span at residues 349-369 (LAAMLGALAALAALAVVGDRP). Over 370–381 (SLTHVVEWIDFE) the chain is Extracellular. The helical transmembrane segment at 382–402 (TLALLFGMMILVAVFSETGFF) threads the bilayer. The Cytoplasmic segment spans residues 403–417 (DYCAVKAYQLSRGRV). Residues 418-438 (WAMIFMLCLMAAILSAFLDNV) form a helical membrane-spanning segment. Residues 439-501 (TTMLLFTPVT…ELRKMGLDFA (63 aa)) lie on the Extracellular side of the membrane. Residues 502-522 (GFTAHMFLGICLVLLVSFPLL) form a helical membrane-spanning segment. Over 523 to 617 (RLLYWNKKLY…RKHRISDRSL (95 aa)) the chain is Cytoplasmic. The chain crosses the membrane as a helical span at residues 618 to 638 (LVKCLTVLGFVISMFFLNSFV). Position 639 (P639) is a topological domain, extracellular. Residues 640–660 (GIHLDLGWIAILGAIWLLILA) traverse the membrane as a helical segment. Over 661–675 (DIHDFEIILHRVEWA) the chain is Cytoplasmic. Residues 676 to 696 (TLLFFAALFVLMEALTHLHLV) form a helical membrane-spanning segment. Over 697-718 (EYVGEQTALLIKMVPEDQRFAA) the chain is Extracellular. Residues 719–739 (AIVLIVWVSALASSLIDNIPF) form a helical membrane-spanning segment. Residues 740 to 759 (TATMIPVLLNLSQDPEISLP) lie on the Cytoplasmic side of the membrane. Residues 760-780 (ALPLMYALALGACLGGNGTLI) form a helical membrane-spanning segment. Residues 781–810 (GASTNVVCAGIAEKHGYGFSFMEFFRLGFP) are Extracellular-facing. Residues 811-831 (VMLMSCTIGMCYLLIAHIVVG) form a helical membrane-spanning segment. The Cytoplasmic segment spans residues 832–833 (WN).

This sequence belongs to the CitM (TC 2.A.11) transporter family. In terms of tissue distribution, most abundant in melanocytes. Also present in neonatal and adult eye tissue presumably as a result of expression in the retinal pigmented epithelium and choroid body, known sites of melanogenesis in the eye. Small but detectable amounts also observed in fetal, neonatal and adult brain. Moderate amounts detected in adult testis and ovary. Not detected in heart, kidney, spleen, liver or thymus.

Its subcellular location is the melanosome membrane. It carries out the reaction chloride(in) = chloride(out). Contributes to a melanosome-specific anion (chloride) current that modulates melanosomal pH for optimal tyrosinase activity required for melanogenesis and the melanosome maturation. One of the components of the mammalian pigmentary system. May serve as a key control point at which color variation is determined. Major determinant of eye color. Seems to regulate the post-translational processing of tyrosinase, which catalyzes the limiting reaction in melanin synthesis. The protein is P protein (Oca2) of Mus musculus (Mouse).